A 515-amino-acid chain; its full sequence is Envelope glycoprotein (515 aa).

The first 33 residues, 1 to 33 (MPKERRSRRRPQPIIRWVSLTLTLLALCRPIQT), serve as a signal peptide directing secretion. Residues 34–435 (WRCSLSLGNQ…LGLTAWVRET (402 aa)) lie on the Extracellular side of the membrane. N-linked (GlcNAc...) asparagine; by host glycans are attached at residues asparagine 129 and asparagine 203. Residues 212 to 215 (CAIC) carry the CXXC motif. Cystine bridges form between cysteine 212-cysteine 215, cysteine 212-cysteine 392, and cysteine 384-cysteine 391. Asparagine 230, asparagine 251, asparagine 256, asparagine 271, and asparagine 287 each carry an N-linked (GlcNAc...) asparagine; by host glycan. Positions 304 to 324 (VAALTLGLALSVGLTGINVAV) are fusion peptide. Coiled-coil stretches lie at residues 330–376 (QRLT…WLYI) and 388–420 (NEPCCFLRIQNDSIILRGDLQPLSQRVSTDWQW). The N-linked (GlcNAc...) asparagine; by host glycan is linked to asparagine 351. The segment at 365-381 (AQNRRGLDWLYIRLGFQ) is immunosuppression. Residues 384–392 (CPTINEPCC) carry the CX6CC motif. The N-linked (GlcNAc...) asparagine; by host glycan is linked to asparagine 398. The chain crosses the membrane as a helical span at residues 436-456 (IHSVLSLFLLALFLLFLAPCL). The S-palmitoyl cysteine; by host moiety is linked to residue cysteine 455. At 457-515 (IKCLTSRLLKLLRQAPHFPEISLTPKPDSDYQALLPSAPEIYSHLSPVKPDYINLRPCP) the chain is on the cytoplasmic side.

In terms of assembly, the mature envelope protein (Env) consists of a trimer of SU-TM heterodimers attached by a labile interchain disulfide bond. Specific enzymatic cleavages in vivo yield mature proteins. Envelope glycoproteins are synthesized as an inactive precursor that is N-glycosylated and processed likely by host cell furin or by a furin-like protease in the Golgi to yield the mature SU and TM proteins. The cleavage site between SU and TM requires the minimal sequence [KR]-X-[KR]-R. In terms of processing, the CXXC motif is highly conserved across a broad range of retroviral envelope proteins. It is thought to participate in the formation of a labile disulfide bond possibly with the CX6CC motif present in the transmembrane protein. Isomerization of the intersubunit disulfide bond to an SU intrachain disulfide bond is thought to occur upon receptor recognition in order to allow membrane fusion. Post-translationally, the transmembrane protein is palmitoylated.

Its subcellular location is the virion membrane. The protein resides in the host cell membrane. In terms of biological role, the surface protein (SU) attaches the virus to the host cell by binding to its receptor. This interaction triggers the refolding of the transmembrane protein (TM) and is thought to activate its fusogenic potential by unmasking its fusion peptide. Fusion occurs at the host cell plasma membrane. Its function is as follows. The transmembrane protein (TM) acts as a class I viral fusion protein. Under the current model, the protein has at least 3 conformational states: pre-fusion native state, pre-hairpin intermediate state, and post-fusion hairpin state. During viral and target cell membrane fusion, the coiled coil regions (heptad repeats) assume a trimer-of-hairpins structure, positioning the fusion peptide in close proximity to the C-terminal region of the ectodomain. The formation of this structure appears to drive apposition and subsequent fusion of viral and target cell membranes. Membranes fusion leads to delivery of the nucleocapsid into the cytoplasm. This is Envelope glycoprotein (env) from Bos taurus (Bovine).